Here is a 670-residue protein sequence, read N- to C-terminus: DNA ligase (670 aa).

Residues 32–36 (DSEYD), 81–82 (SL), and Glu114 contribute to the NAD(+) site. Lys116 functions as the N6-AMP-lysine intermediate in the catalytic mechanism. Positions 137, 174, 291, and 315 each coordinate NAD(+). Positions 409, 412, 427, and 433 each coordinate Zn(2+). The 79-residue stretch at 592–670 (ASENLFKDKT…EEEFLAQITR (79 aa)) folds into the BRCT domain.

The protein belongs to the NAD-dependent DNA ligase family. LigA subfamily. Requires Mg(2+) as cofactor. Mn(2+) is required as a cofactor.

The enzyme catalyses NAD(+) + (deoxyribonucleotide)n-3'-hydroxyl + 5'-phospho-(deoxyribonucleotide)m = (deoxyribonucleotide)n+m + AMP + beta-nicotinamide D-nucleotide.. Functionally, DNA ligase that catalyzes the formation of phosphodiester linkages between 5'-phosphoryl and 3'-hydroxyl groups in double-stranded DNA using NAD as a coenzyme and as the energy source for the reaction. It is essential for DNA replication and repair of damaged DNA. This chain is DNA ligase, found in Haemophilus influenzae (strain 86-028NP).